Here is a 588-residue protein sequence, read N- to C-terminus: Beta-(1--&gt;2)glucan export ATP-binding/permease protein NdvA (588 aa).

Residues 21–301 form the ABC transmembrane type-1 domain; that stretch reads VAVVVIANVI…MRQFVTQIFE (281 aa). 6 helical membrane-spanning segments follow: residues 22-42, 57-77, 136-156, 158-178, 248-268, and 272-292; these read AVVVIANVILAAITIAEPVLF, PILILWAGFGVFNTVAYVAVA, THLATFVALVLLIPTAMAMDL, LSFVLIGLGIVYWFIGKWVMG, TASTVSMMIILVIGTVLVKNG, and VGDVIAFIGFANLLIGRLDQM. Residues 335–569 enclose the ABC transporter domain; that stretch reads VEFRNINFGF…GGRFTSLLRT (235 aa). 368-375 is an ATP binding site; the sequence is GPTGAGKT.

The protein belongs to the ABC transporter superfamily. Beta-(1--&gt;2)glucan exporter (TC 3.A.1.108.1) family. As to quaternary structure, homodimer.

The protein resides in the cell inner membrane. It catalyses the reaction [(1-&gt;2)-beta-D-glucosyl](n)(in) + ATP + H2O = [(1-&gt;2)-beta-D-glucosyl](n)(out) + ADP + phosphate + H(+). Functionally, involved in beta-(1--&gt;2)glucan export which is required for crown gall tumor formation. Transmembrane domains (TMD) form a pore in the inner membrane and the ATP-binding domain (NBD) is responsible for energy generation. The polypeptide is Beta-(1--&gt;2)glucan export ATP-binding/permease protein NdvA (Rhizobium radiobacter (Agrobacterium tumefaciens)).